Consider the following 170-residue polypeptide: Brassinosteroid-responsive RING protein 1 (170 aa).

The chain crosses the membrane as a helical span at residues 15–37 (LFVQTLSILGFIRTIVFSIFRFL). The RING-type; atypical zinc-finger motif lies at 94–137 (CAVCLYEFEGEQEIRWLRNCRHIFHRSCLDRWMDHDQKTCPLCR).

The protein belongs to the RING-type zinc finger family. As to expression, highly expressed in stems, rosette leaves and siliques, and moderately expressed in roots, cauline leaves and flower. Detected at low levels in seeds.

It localises to the membrane. In terms of biological role, may be involved in the brassinosteroids (BRs) signaling pathway and regulate the growth and development of rosette leaves. Seems to prevent over development of leaves and inflorescence stems. The chain is Brassinosteroid-responsive RING protein 1 from Arabidopsis thaliana (Mouse-ear cress).